Here is a 292-residue protein sequence, read N- to C-terminus: MSEIRLYVTTTESKAEEILDLLSAVFGEEDFAIGTTEIDEKEDIWEASIYMMAEDEAEVHSRVEDALKASFPNARLEREVIPDVDWVVKSLEGLKPVRAGRFLVHGSHDRDKVRPGDIAIEIDAGQAFGTGHHGTTAGCLEAIDAVVRSRPVRNALDLGTGSGVLAIAVRKLKNIPVLATDIDPIATRVAAENVRRNGIASGIVTRTAPGFHSTAFSEHGPFDLIIANILARPLIRMAPKLATHLAPGGSVILSGILATQRWKVIAAYSGARLRHVRTIWRNGWVTIHFDRP.

S-adenosyl-L-methionine is bound by residues T136, G159, D181, and N228.

Belongs to the methyltransferase superfamily. PrmA family.

It localises to the cytoplasm. It carries out the reaction L-lysyl-[protein] + 3 S-adenosyl-L-methionine = N(6),N(6),N(6)-trimethyl-L-lysyl-[protein] + 3 S-adenosyl-L-homocysteine + 3 H(+). Its function is as follows. Methylates ribosomal protein L11. The protein is Ribosomal protein L11 methyltransferase of Rhizobium leguminosarum bv. trifolii (strain WSM2304).